Reading from the N-terminus, the 488-residue chain is MLSLATLDMLLSISEGELIEEMVVGLLAAPQLAIFFEKFPRIKRALMKDIPGWKQNLQQRIREASVPPGLANEFSLYQQSLLEDSPQFYAHLPDIVAQLQDLHSPFATQAKTLVQTADLAKNPPGGDSLQTLFLQRWRVSLILQTITIHHQLLEQEREQLLAELQRRLALSGALEPILTTNDNAAGRLWDMSQGHLQRGDYQLLLQYGDFLQQQPELIRLAEQLGRSRSAKAQPAPDARYEPYTVMVRQPDSVPEEVSGIHQSNDILRLLPTELVMLGMSELEFEFYRRLLERRLLTYRLQGDNWQEKTQQRPVSLKQNDEQPRGPFIVCVDTSGSMGGFNEQCAKAFCLALLRIALADNRRCYIMLFATEIIHYELSADNGIEQAIRFLNQHFRGGTDLAACLANTLNKMEDREWYDADAVIISDFIAQRLPEELVRKIKIQQQAHQHRFHAVAMSAYGKPGIMRIFDHIWRFDTSLKSRLIRRWKR.

It belongs to the ViaA family. As to quaternary structure, homodimer. Interacts with RavA.

It localises to the cytoplasm. Its function is as follows. Component of the RavA-ViaA chaperone complex, which may act on the membrane to optimize the function of some of the respiratory chains. ViaA stimulates the ATPase activity of RavA. This Yersinia pseudotuberculosis serotype O:1b (strain IP 31758) protein is Regulatory protein ViaA.